A 1019-amino-acid polypeptide reads, in one-letter code: Photoactivated adenylate cyclase subunit alpha-like protein FB (1019 aa).

One can recognise a BLUF 1 domain in the interval 55 to 148 (LRRLMYLSAS…GRLYGEWHMK (94 aa)). The 129-residue stretch at 204-332 (VVTFIYLVEF…DCINTASRIT (129 aa)) folds into the Guanylate cyclase 1 domain. A BLUF 2 domain is found at 467–559 (LITLTYISQA…REYGSPLDMT (93 aa)). Residues 615 to 744 (VLLATDICSF…EVSARVMEVV (130 aa)) enclose the Guanylate cyclase 2 domain. The segment covering 825-839 (APGRGAPAGGIPSSP) has biased composition (low complexity). Residues 825–862 (APGRGAPAGGIPSSPKVRPPGRTNSVSSYTPDPNEALD) form a disordered region. The span at 846–855 (RTNSVSSYTP) shows a compositional bias: polar residues.

This sequence belongs to the adenylyl cyclase class-4/guanylyl cyclase family. In terms of assembly, heterotetramer of two alpha and two beta subunits.

Its subcellular location is the cell projection. The protein localises to the cilium. It localises to the flagellum. The sequence is that of Photoactivated adenylate cyclase subunit alpha-like protein FB from Euglena gracilis.